The chain runs to 601 residues: Leucine-rich repeat-containing protein 40 (601 aa).

21 LRR repeats span residues 33-56 (ARKSGQLNLSGRGLTEVPASVWRL), 79-101 (QTDLTKLLLSSNKLQSIPDDVKL), 102-124 (LPALVVLDIHDNQLSSLPDSIGD), 125-148 (LEQLQKLILSHNKLTELPSGVWRL), 150-170 (NLRCLHLQQNLIEQIPRDLGQ), 171-193 (LVNLDELDLSNNHLIDIPESLAN), 194-217 (LQNLVKLDLSCNKLKSLPPAISQM), 219-239 (NLRMLDCSRNQMESIPPVLAQ), 240-264 (MESLEQLYLRHNKLRYLPELPCCKT), 266-285 (KELHCGNNQIEVLEAEHLKH), 286-308 (LNALSLLELRDNKVKSLPEEITL), 309-334 (LQGLERLDLTNNDISSLPCGLGTLPK), 336-355 (KSLSLEGNPLRAIRRDLLTK), 397-420 (IKTLKTLDYSEKQDATIPDDVFDA), 423-446 (GNPVANVNFSKNQLTAVPHRIVDL), 447-469 (KDSLADINLGFNKLTTIPADFCH), 470-492 (LKQLMHIDLRNNLLISLPMELEG), 493-516 (LIKLRSVILSFNRFKSFPEVLYRI), 518-539 (SLETILISSNQVGGIDAVQMKT), 540-563 (LSRLSTLDLSNNDIMQVPPELGNC), and 565-586 (SLRALMLDGNPFRNPRAAILIK).

The protein is Leucine-rich repeat-containing protein 40 (lrrc40) of Danio rerio (Zebrafish).